A 445-amino-acid chain; its full sequence is MLDNLKDAVRKFLGSSNYDKAVNDFIKELQISLIKSDVNVKLVSNLTQKIKDRLEKEKPPTAIERREWFISIVYDELSKLFGGDINPEVMPKKIPYVIMLVGVQGSGKTTTAGKLALFYKKKGYKVGLVAADVYRPAAYDQLVQIGKQINVPVYGEPNNTDAVGIAKRGVEKFLSEKYDIIIVDTAGRHGYGEEVKLLEEMKNMYSEIKPDEVILVIDASIGQKAYDLASRFHQASPIGSIIVTKMDGTAKGGGALSAVAATGAAIKFIGTGEKLDELEVFNPRRFVSRILGMGDIESIIEKIKGMEEYEQIQKKMEEVMSGKAKLTLRDIYKQLTALRKMGPLNKILQMLPGFGVFSQIPEEQLKLGEEKIKKFLVIMNSMTYKELDNPSIIDKSRIRRIAKGSGTSPEEVKELLKQYQVTNNLLKMVKRRKGLAKLFEDRNSK.

Residues 102–109 (GVQGSGKT), 184–188 (DTAGR), and 244–247 (TKMD) contribute to the GTP site.

The protein belongs to the GTP-binding SRP family. SRP54 subfamily. As to quaternary structure, part of the signal recognition particle protein translocation system, which is composed of SRP and FtsY. Archaeal SRP consists of a 7S RNA molecule of 300 nucleotides and two protein subunits: SRP54 and SRP19.

The protein localises to the cytoplasm. It catalyses the reaction GTP + H2O = GDP + phosphate + H(+). Involved in targeting and insertion of nascent membrane proteins into the cytoplasmic membrane. Binds to the hydrophobic signal sequence of the ribosome-nascent chain (RNC) as it emerges from the ribosomes. The SRP-RNC complex is then targeted to the cytoplasmic membrane where it interacts with the SRP receptor FtsY. In Sulfurisphaera tokodaii (strain DSM 16993 / JCM 10545 / NBRC 100140 / 7) (Sulfolobus tokodaii), this protein is Signal recognition particle 54 kDa protein.